The following is a 223-amino-acid chain: N-acetylmuramic acid 6-phosphate phosphatase (223 aa).

The active-site Nucleophile is the D9. Mg(2+)-binding residues include D9, D11, and D168. D11 (proton donor) is an active-site residue.

It belongs to the HAD-like hydrolase superfamily. CbbY/CbbZ/Gph/YieH family. Phosphatase MupP subfamily. Mg(2+) serves as cofactor.

It carries out the reaction N-acetyl-D-muramate 6-phosphate + H2O = N-acetyl-D-muramate + phosphate. It participates in cell wall biogenesis; peptidoglycan recycling. Functionally, specifically catalyzes the dephosphorylation of N-acetylmuramate 6-phosphate (MurNAc-6P) to MurNac. Is involved in peptidoglycan recycling as part of a cell wall recycling pathway that bypasses de novo biosynthesis of the peptidoglycan precursor UDP-MurNAc. Plays a role in intrinsic resistance to fosfomycin, which targets the de novo synthesis of UDP-MurNAc. Shows a very low activity on GlcNAc-6P, and neither alpha-1-phosphorylated MurNAc, GlcNAc, or glucose nor glucosamine-6P or glucose-6P can be used as a substrate. This chain is N-acetylmuramic acid 6-phosphate phosphatase, found in Pseudomonas putida (strain ATCC 47054 / DSM 6125 / CFBP 8728 / NCIMB 11950 / KT2440).